A 500-amino-acid polypeptide reads, in one-letter code: Endothelial lipase (500 aa).

Positions 1–20 (MRNTVFLLGFWSVYCYFPAG) are cleaved as a signal peptide. Cys64 and Cys77 are disulfide-bonded. N-linked (GlcNAc...) asparagine glycosylation is found at Asn65, Asn80, and Asn136. The active-site Nucleophile is the Ser169. The active-site Charge relay system is the Asp193. A disulfide bridge connects residues Cys252 and Cys272. His274 serves as the catalytic Charge relay system. Disulfide bonds link Cys297–Cys316 and Cys308–Cys311. A heparin-binding site is contributed by 325 to 337 (KMRKKRNSKMYLK). The PLAT domain maps to 347–482 (YHYQLKVHMF…SPGQELWFHK (136 aa)). Residues Asn359 and Asn393 are each glycosylated (N-linked (GlcNAc...) asparagine). A disulfide bridge links Cys463 with Cys483. Asn491 is a glycosylation site (N-linked (GlcNAc...) asparagine).

It belongs to the AB hydrolase superfamily. Lipase family. In terms of assembly, head to tail homodimer. As to expression, expressed in placenta, lung, liver, testis and spleen.

It is found in the secreted. It catalyses the reaction a triacylglycerol + H2O = a diacylglycerol + a fatty acid + H(+). The catalysed reaction is a 1,2-diacyl-sn-glycero-3-phosphocholine + H2O = a 2-acyl-sn-glycero-3-phosphocholine + a fatty acid + H(+). The enzyme catalyses 1,2,3-tri-(9Z-octadecenoyl)-glycerol + H2O = di-(9Z)-octadecenoylglycerol + (9Z)-octadecenoate + H(+). It carries out the reaction 1,2,3-tributanoylglycerol + H2O = dibutanoylglycerol + butanoate + H(+). It catalyses the reaction 1,2-dihexadecanoyl-sn-glycero-3-phosphocholine + H2O = hexadecanoyl-sn-glycero-3-phosphocholine + hexadecanoate + H(+). Exerts both phospholipase and triglyceride lipase activities. More active as a phospholipase than a triglyceride lipase. Hydrolyzes triglycerides, both with short-chain fatty acyl groups (tributyrin) and long-chain fatty acyl groups (triolein) with similar levels of activity toward both types of substrates. Hydrolyzes high density lipoproteins (HDL) more efficiently than other lipoproteins. This Mus musculus (Mouse) protein is Endothelial lipase (Lipg).